A 172-amino-acid chain; its full sequence is NADH-ubiquinone oxidoreductase chain 6 (172 aa).

Helical transmembrane passes span 1 to 21, 38 to 58, 86 to 106, and 147 to 167; these read MNNY…GLAL, VGCL…VFLI, WLIL…ICVL, and CATW…FIII.

This sequence belongs to the complex I subunit 6 family. Core subunit of respiratory chain NADH dehydrogenase (Complex I) which is composed of 45 different subunits.

Its subcellular location is the mitochondrion inner membrane. It carries out the reaction a ubiquinone + NADH + 5 H(+)(in) = a ubiquinol + NAD(+) + 4 H(+)(out). In terms of biological role, core subunit of the mitochondrial membrane respiratory chain NADH dehydrogenase (Complex I) which catalyzes electron transfer from NADH through the respiratory chain, using ubiquinone as an electron acceptor. Essential for the catalytic activity and assembly of complex I. The sequence is that of NADH-ubiquinone oxidoreductase chain 6 (Mtnd6) from Mus musculus (Mouse).